A 138-amino-acid chain; its full sequence is Putative pre-16S rRNA nuclease (138 aa).

It belongs to the YqgF nuclease family.

The protein resides in the cytoplasm. Functionally, could be a nuclease involved in processing of the 5'-end of pre-16S rRNA. The sequence is that of Putative pre-16S rRNA nuclease from Geobacillus kaustophilus (strain HTA426).